The primary structure comprises 215 residues: Cytochrome b6 (215 aa).

A helical membrane pass occupies residues 32–52; the sequence is IFYCLGGITLTCFLVQVATGF. Position 35 (C35) interacts with heme c. The heme b site is built by H86 and H100. The next 3 helical transmembrane spans lie at 90 to 110, 116 to 136, and 186 to 206; these read ASMMVLMMILHVFRVYLTGGF, LTWVTGVVLGVLTASFGVTGY, and LHTFVLPLLTAVFMLMHFPMI. Heme b is bound by residues H187 and H202.

Belongs to the cytochrome b family. PetB subfamily. In terms of assembly, the 4 large subunits of the cytochrome b6-f complex are cytochrome b6, subunit IV (17 kDa polypeptide, PetD), cytochrome f and the Rieske protein, while the 4 small subunits are PetG, PetL, PetM and PetN. The complex functions as a dimer. Heme b serves as cofactor. It depends on heme c as a cofactor.

The protein localises to the plastid. The protein resides in the chloroplast thylakoid membrane. Functionally, component of the cytochrome b6-f complex, which mediates electron transfer between photosystem II (PSII) and photosystem I (PSI), cyclic electron flow around PSI, and state transitions. The chain is Cytochrome b6 from Jasminum nudiflorum (Winter jasmine).